The following is a 445-amino-acid chain: Homogentisate 1,2-dioxygenase (445 aa).

K98 carries the N6-acetyllysine modification. The Fe cation site is built by H335, E341, and H371. K414 carries the post-translational modification N6-succinyllysine.

The protein belongs to the homogentisate dioxygenase family. As to quaternary structure, homohexamer arranged as a dimer of trimers. Requires Fe cation as cofactor.

It carries out the reaction homogentisate + O2 = 4-maleylacetoacetate + H(+). Its pathway is amino-acid degradation; L-phenylalanine degradation; acetoacetate and fumarate from L-phenylalanine: step 4/6. In terms of biological role, catalyzes the conversion of homogentisate to maleylacetoacetate. In Mus musculus (Mouse), this protein is Homogentisate 1,2-dioxygenase (Hgd).